A 260-amino-acid chain; its full sequence is Transmembrane protein 106C (260 aa).

Gly2 is lipidated: N-myristoyl glycine. Residues 85–105 (YVLLSVLLCLLASGLVFFFLF) form a helical membrane-spanning segment. A glycan (N-linked (GlcNAc...) asparagine) is linked at Asn184. The chain crosses the membrane as a helical span at residues 196–216 (SYVYFYCTLPAIRVHNIVIFM).

Belongs to the TMEM106 family. In terms of assembly, interacts with TMEM106B.

The protein resides in the endoplasmic reticulum membrane. Its subcellular location is the membrane. The sequence is that of Transmembrane protein 106C (Tmem106c) from Mus musculus (Mouse).